Consider the following 536-residue polypeptide: Transcription factor cheR (536 aa).

A DNA-binding region (zn(2)-C6 fungal-type) is located at residues 19–57 (CDRCHRHKLRCERSSVIVNGGVAVPLGPCKRCLKACIPC). 2 disordered regions span residues 70–122 (AKTG…LSGT) and 220–243 (ALTD…PREE). Residues 88-108 (AASPAKRAPSPARRPTASTPR) are compositionally biased toward low complexity.

The protein localises to the nucleus. In terms of biological role, transcription factor; part of the gene cluster that mediates the biosynthesis of chaetoglobosin A which has a unique inhibitory activity against actin polymerization in mammalian cells. Chaetoglobosin A and its intermediates are involved in the morphological differentiation of C.globosum. Binds directly to asymmetric direct repeats present in the promoters of the chaetoglobosin A cluster genes. The chain is Transcription factor cheR from Chaetomium globosum (strain ATCC 6205 / CBS 148.51 / DSM 1962 / NBRC 6347 / NRRL 1970) (Soil fungus).